Consider the following 352-residue polypeptide: Holliday junction branch migration complex subunit RuvB (352 aa).

A disordered region spans residues 1-42 (MAIVSSSAGRADSQPPAAKSRVVDASPLPEEASPAREDGLRP). The tract at residues 13–201 (SQPPAAKSRV…FGLIQRLEFY (189 aa)) is large ATPase domain (RuvB-L). Residues 33-42 (SPAREDGLRP) are compositionally biased toward basic and acidic residues. 9 residues coordinate ATP: L40, R41, G82, K85, T86, T87, R191, Y201, and R238. Residue T86 participates in Mg(2+) binding. Residues 202-273 (GLEDLQAIVE…LVDEALTLHR (72 aa)) form a small ATPAse domain (RuvB-S) region. The segment at 276 to 352 (ARGLDASDRR…RRHLGWPELP (77 aa)) is head domain (RuvB-H). The DNA site is built by R331 and R336.

Belongs to the RuvB family. Homohexamer. Forms an RuvA(8)-RuvB(12)-Holliday junction (HJ) complex. HJ DNA is sandwiched between 2 RuvA tetramers; dsDNA enters through RuvA and exits via RuvB. An RuvB hexamer assembles on each DNA strand where it exits the tetramer. Each RuvB hexamer is contacted by two RuvA subunits (via domain III) on 2 adjacent RuvB subunits; this complex drives branch migration. In the full resolvosome a probable DNA-RuvA(4)-RuvB(12)-RuvC(2) complex forms which resolves the HJ.

Its subcellular location is the cytoplasm. It carries out the reaction ATP + H2O = ADP + phosphate + H(+). The RuvA-RuvB-RuvC complex processes Holliday junction (HJ) DNA during genetic recombination and DNA repair, while the RuvA-RuvB complex plays an important role in the rescue of blocked DNA replication forks via replication fork reversal (RFR). RuvA specifically binds to HJ cruciform DNA, conferring on it an open structure. The RuvB hexamer acts as an ATP-dependent pump, pulling dsDNA into and through the RuvAB complex. RuvB forms 2 homohexamers on either side of HJ DNA bound by 1 or 2 RuvA tetramers; 4 subunits per hexamer contact DNA at a time. Coordinated motions by a converter formed by DNA-disengaged RuvB subunits stimulates ATP hydrolysis and nucleotide exchange. Immobilization of the converter enables RuvB to convert the ATP-contained energy into a lever motion, pulling 2 nucleotides of DNA out of the RuvA tetramer per ATP hydrolyzed, thus driving DNA branch migration. The RuvB motors rotate together with the DNA substrate, which together with the progressing nucleotide cycle form the mechanistic basis for DNA recombination by continuous HJ branch migration. Branch migration allows RuvC to scan DNA until it finds its consensus sequence, where it cleaves and resolves cruciform DNA. This chain is Holliday junction branch migration complex subunit RuvB, found in Prochlorococcus marinus (strain MIT 9303).